The sequence spans 182 residues: Small ribosomal subunit protein uS4 (182 aa).

Disordered regions lie at residues 1-23 (MGHPKKPRKQYDTPSHPWNADRI) and 158-182 (SSVAKQFETQETEEVAAEEEPKDEE). An S4 RNA-binding domain is found at 103-170 (RRLQSLVFKR…AKQFETQETE (68 aa)). A compositionally biased stretch (acidic residues) spans 167-182 (QETEEVAAEEEPKDEE).

The protein belongs to the universal ribosomal protein uS4 family. In terms of assembly, part of the 30S ribosomal subunit. Contacts protein S5. The interaction surface between S4 and S5 is involved in control of translational fidelity.

Its function is as follows. One of the primary rRNA binding proteins, it binds directly to 16S rRNA where it nucleates assembly of the body of the 30S subunit. In terms of biological role, with S5 and S12 plays an important role in translational accuracy. The polypeptide is Small ribosomal subunit protein uS4 (Methanosphaera stadtmanae (strain ATCC 43021 / DSM 3091 / JCM 11832 / MCB-3)).